We begin with the raw amino-acid sequence, 232 residues long: Phosphatidylserine decarboxylase proenzyme (232 aa).

Ser-190 (schiff-base intermediate with substrate; via pyruvic acid) is an active-site residue. Ser-190 carries the post-translational modification Pyruvic acid (Ser); by autocatalysis.

Belongs to the phosphatidylserine decarboxylase family. PSD-A subfamily. Heterodimer of a large membrane-associated beta subunit and a small pyruvoyl-containing alpha subunit. Pyruvate serves as cofactor. Is synthesized initially as an inactive proenzyme. Formation of the active enzyme involves a self-maturation process in which the active site pyruvoyl group is generated from an internal serine residue via an autocatalytic post-translational modification. Two non-identical subunits are generated from the proenzyme in this reaction, and the pyruvate is formed at the N-terminus of the alpha chain, which is derived from the carboxyl end of the proenzyme. The post-translation cleavage follows an unusual pathway, termed non-hydrolytic serinolysis, in which the side chain hydroxyl group of the serine supplies its oxygen atom to form the C-terminus of the beta chain, while the remainder of the serine residue undergoes an oxidative deamination to produce ammonia and the pyruvoyl prosthetic group on the alpha chain.

The protein resides in the cell membrane. The enzyme catalyses a 1,2-diacyl-sn-glycero-3-phospho-L-serine + H(+) = a 1,2-diacyl-sn-glycero-3-phosphoethanolamine + CO2. The protein operates within phospholipid metabolism; phosphatidylethanolamine biosynthesis; phosphatidylethanolamine from CDP-diacylglycerol: step 2/2. Functionally, catalyzes the formation of phosphatidylethanolamine (PtdEtn) from phosphatidylserine (PtdSer). This is Phosphatidylserine decarboxylase proenzyme from Brucella anthropi (strain ATCC 49188 / DSM 6882 / CCUG 24695 / JCM 21032 / LMG 3331 / NBRC 15819 / NCTC 12168 / Alc 37) (Ochrobactrum anthropi).